Reading from the N-terminus, the 387-residue chain is Pepsin II-1 (387 aa).

The N-terminal stretch at 1 to 15 is a signal peptide; it reads MKWLLLLGLLALSEC. The propeptide at 16 to 59 is activation peptide; the sequence is IVHKVPLVRKKSLRKNLIEKGLLQDYLKTHTPNLATKYFPKETF. In terms of domain architecture, Peptidase A1 spans 75–384; it reads YFGTISIGTP…DRANNQVGLA (310 aa). Asp93 is an active-site residue. Residues Cys106 and Cys111 are joined by a disulfide bond. The residue at position 129 (Ser129) is a Phosphoserine. Cysteines 267 and 271 form a disulfide. Residue Asp276 is part of the active site. An intrachain disulfide couples Cys310 to Cys343.

It belongs to the peptidase A1 family.

It localises to the secreted. The catalysed reaction is Preferential cleavage: hydrophobic, preferably aromatic, residues in P1 and P1' positions. Cleaves 1-Phe-|-Val-2, 4-Gln-|-His-5, 13-Glu-|-Ala-14, 14-Ala-|-Leu-15, 15-Leu-|-Tyr-16, 16-Tyr-|-Leu-17, 23-Gly-|-Phe-24, 24-Phe-|-Phe-25 and 25-Phe-|-Tyr-26 bonds in the B chain of insulin.. Shows particularly broad specificity; although bonds involving phenylalanine and leucine are preferred, many others are also cleaved to some extent. The polypeptide is Pepsin II-1 (Oryctolagus cuniculus (Rabbit)).